The following is a 589-amino-acid chain: Serine/threonine-protein phosphatase 2A 65 kDa regulatory subunit A alpha isoform (589 aa).

The residue at position 2 (A2) is an N-acetylalanine. HEAT repeat units lie at residues 8 to 46, 47 to 84, 85 to 123, 124 to 161, 162 to 200, 201 to 239, 240 to 278, 279 to 321, 322 to 360, 361 to 399, 400 to 438, 439 to 477, 478 to 516, 517 to 555, and 556 to 589; these read DSLYPIAVLIDELRNEDVQLRLNSIKKLSTIALALGVER, TRSELLPFLTDTIYDEDEVLLALAEQLGTFTTLVGGPE, YVHCLLPPLESLATVEETVVRDKAVESLRAISHEHSPSD, LEAHFVPLVKRLAGGDWFTSRTSACGLFSVCYPRVSSA, VKAELRQYFRNLCSDDTPMVRRAAASKLGEFAKVLELDN, VKSEIIPMFSNLASDEQDSVRLLAVEACVNIAQLLPQED, LEALVMPTLRQAAEDKSWRVRYMVADKFTELHKAVGPEI, TKTD…RENV, IMTQILPCIKELVSDANQHVKSALASVIMGLSPILGKDS, TIEHLLPLFLAQLKDECPEVRLNIISNLDCVNEVIGIRQ, LSQSLLPAIVELAEDAKWRVRLAIIEYMPLLAGQLGVEF, FDEKLNSLCMAWLVDHVYAIREAATSNLKKLVEKFGKEW, AHATIIPKVLAMSGDPNYLHRMTTLFCINVLSEVCGQDI, TTKHMLPTVLRMAGDPVANVRFNVAKSLQKIGPILDNST, and LQSEVKPVLEKLTQDQDVDVKYFAQEALTVLSLA. The segment at 8–399 is PP2A subunit B binding; it reads DSLYPIAVLI…CVNEVIGIRQ (392 aa). The segment at 47–321 is polyoma small and medium T antigens Binding; that stretch reads TRSELLPFLT…NLSADCRENV (275 aa). The interval 85–239 is SV40 small T antigen binding; that stretch reads YVHCLLPPLE…NIAQLLPQED (155 aa). K280 carries the N6-acetyllysine modification. The interval 400–589 is PP2A subunit C binding; it reads LSQSLLPAIV…QEALTVLSLA (190 aa).

It belongs to the phosphatase 2A regulatory subunit A family. PP2A consists of a common heterodimeric core enzyme, composed of PPP2CA a 36 kDa catalytic subunit (subunit C) and PPP2R1A a 65 kDa constant regulatory subunit (PR65 or subunit A), that associates with a variety of regulatory subunits. Proteins that associate with the core dimer include three families of regulatory subunits B (the R2/B/PR55/B55, R3/B''/PR72/PR130/PR59 and R5/B'/B56 families), the 48 kDa variable regulatory subunit, viral proteins, and cell signaling molecules. Found in a complex with at least ARL2, PPP2CB, PPP2R1A, PPP2R2A, PPP2R5E and TBCD. Interacts with the PP2A C catalytic subunit PPP2CA. Interacts with the PP2A B subunit PPP2R2A. Interacts with the PP2A B subunit PPP2R5D. Interacts with FOXO1; the interaction dephosphorylates FOXO1 on AKT-mediated phosphorylation sites. Interacts with IPO9. Interacts with TP53 and SGO1. Interacts with PLA2G16; this interaction might decrease PP2A activity. Interacts with CTTNBP2NL. Interacts with GNA12; the interaction promotes protein phosphatase 2A activation causing dephosphorylation of MAPT. Interacts with CIP2A; this interaction stabilizes CIP2A. Interacts with PABIR1/FAM122A. Interacts with ADCY8; antagonizes interaction between ADCY8 and calmodulin. Interacts with CRTC3 (when phosphorylated at 'Ser-391'). Interacts with SPRY2. Part of the core of STRIPAK complexes composed of PP2A catalytic and scaffolding subunits, the striatins (PP2A regulatory subunits), the striatin-associated proteins MOB4, STRIP1 and STRIP2, PDCD10 and members of the STE20 kinases, such as STK24 and STK26. Component of the Integrator-PP2A (INTAC) complex, composed of the Integrator core complex and protein phosphatase 2A subunits PPP2CA and PPP2R1A.

The protein localises to the cytoplasm. It localises to the nucleus. The protein resides in the chromosome. It is found in the centromere. Its subcellular location is the lateral cell membrane. The protein localises to the cell projection. It localises to the dendrite. Functionally, the PR65 subunit of protein phosphatase 2A serves as a scaffolding molecule to coordinate the assembly of the catalytic subunit and a variable regulatory B subunit. Upon interaction with GNA12 promotes dephosphorylation of microtubule associated protein TAU/MAPT. Required for proper chromosome segregation and for centromeric localization of SGO1 in mitosis. Together with RACK1 adapter, mediates dephosphorylation of AKT1 at 'Ser-473', preventing AKT1 activation and AKT-mTOR signaling pathway. Dephosphorylation of AKT1 is essential for regulatory T-cells (Treg) homeostasis and stability. Part of the striatin-interacting phosphatase and kinase (STRIPAK) complexes. STRIPAK complexes have critical roles in protein (de)phosphorylation and are regulators of multiple signaling pathways including Hippo, MAPK, nuclear receptor and cytoskeleton remodeling. Different types of STRIPAK complexes are involved in a variety of biological processes such as cell growth, differentiation, apoptosis, metabolism and immune regulation. Key mediator of a quality checkpoint during transcription elongation as part of the Integrator-PP2A (INTAC) complex. The INTAC complex drives premature transcription termination of transcripts that are unfavorably configured for transcriptional elongation: within the INTAC complex, acts as a scaffolding subunit for PPP2CA, which catalyzes dephosphorylation of the C-terminal domain (CTD) of Pol II subunit POLR2A/RPB1 and SUPT5H/SPT5, thereby preventing transcriptional elongation. Regulates the recruitment of the SKA complex to kinetochores. The chain is Serine/threonine-protein phosphatase 2A 65 kDa regulatory subunit A alpha isoform (PPP2R1A) from Bos taurus (Bovine).